The sequence spans 578 residues: Protein LIKE EARLY STARVATION, chloroplastic (578 aa).

The transit peptide at 1-56 directs the protein to the chloroplast; sequence MALRLGVSIGAALGSSHWDDGQRVRQRDFSASVNFTAPVTSRRSLRGSRTGVRILR. Disordered stretches follow at residues 146–166 and 187–206; these read NNSG…TSEV and SETS…TPPQ.

Belongs to the ESV1 family. Expressed ubiquitously.

The protein resides in the plastid. Its subcellular location is the chloroplast stroma. Functionally, binds preferentially to highly ordered alpha-glucans, such as starch and crystalline maltodextrins. Involved in the organization of the starch granule matrix, thus influencing starch turnover by modulating the accessibility of starch polymers to modifying and degrading enzymes involved in phosphorylation, hydrolyzes and synthesis, including starch synthases (SSI and SSIII), starch phosphorylases (PHS1), isoamylase, beta-amylase, glucan water dikinase (GWD) and phosphoglucan water dikinase (PWD). This Arabidopsis thaliana (Mouse-ear cress) protein is Protein LIKE EARLY STARVATION, chloroplastic.